The primary structure comprises 163 residues: Cyclic pyranopterin monophosphate synthase (163 aa).

Residues 75-77 (LCH) and 115-116 (ME) each bind substrate. The active site involves Asp130.

It belongs to the MoaC family. As to quaternary structure, homohexamer; trimer of dimers.

The enzyme catalyses (8S)-3',8-cyclo-7,8-dihydroguanosine 5'-triphosphate = cyclic pyranopterin phosphate + diphosphate. It participates in cofactor biosynthesis; molybdopterin biosynthesis. Functionally, catalyzes the conversion of (8S)-3',8-cyclo-7,8-dihydroguanosine 5'-triphosphate to cyclic pyranopterin monophosphate (cPMP). The protein is Cyclic pyranopterin monophosphate synthase of Variovorax paradoxus (strain S110).